A 187-amino-acid polypeptide reads, in one-letter code: Plasmodium-specific hydrophobic abundant protein (187 aa).

Positions 1–18 (MMKYVFVALCLFAVVALA) are cleaved as a signal peptide.

The protein to HAP-S protein.

Its subcellular location is the membrane. This Physarum polycephalum (Slime mold) protein is Plasmodium-specific hydrophobic abundant protein.